The following is a 101-amino-acid chain: NADH-quinone oxidoreductase subunit K (101 aa).

The next 3 membrane-spanning stretches (helical) occupy residues 4-24 (LSHY…GIFI), 29-49 (IIVI…NLVA), and 65-85 (FVLT…VVFF).

This sequence belongs to the complex I subunit 4L family. In terms of assembly, NDH-1 is composed of 14 different subunits. Subunits NuoA, H, J, K, L, M, N constitute the membrane sector of the complex.

The protein resides in the cell inner membrane. It catalyses the reaction a quinone + NADH + 5 H(+)(in) = a quinol + NAD(+) + 4 H(+)(out). NDH-1 shuttles electrons from NADH, via FMN and iron-sulfur (Fe-S) centers, to quinones in the respiratory chain. The immediate electron acceptor for the enzyme in this species is believed to be ubiquinone. Couples the redox reaction to proton translocation (for every two electrons transferred, four hydrogen ions are translocated across the cytoplasmic membrane), and thus conserves the redox energy in a proton gradient. The protein is NADH-quinone oxidoreductase subunit K of Methylobacterium nodulans (strain LMG 21967 / CNCM I-2342 / ORS 2060).